The sequence spans 280 residues: tRNA pseudouridine synthase A (280 aa).

Catalysis depends on Asp-60, which acts as the Nucleophile. A substrate-binding site is contributed by Tyr-119.

This sequence belongs to the tRNA pseudouridine synthase TruA family. Homodimer.

The catalysed reaction is uridine(38/39/40) in tRNA = pseudouridine(38/39/40) in tRNA. Formation of pseudouridine at positions 38, 39 and 40 in the anticodon stem and loop of transfer RNAs. This Treponema pallidum (strain Nichols) protein is tRNA pseudouridine synthase A.